A 268-amino-acid chain; its full sequence is Phosphatidylglycerol--prolipoprotein diacylglyceryl transferase (268 aa).

The next 4 membrane-spanning stretches (helical) occupy residues 14–34 (LGPIKIHWYGLMYLLGIFAGW), 57–77 (LTFYVALGVILGGRIGYIIFY), 90–110 (FFLWDGGMSFHGGFIGVLIAF), and 117–137 (IGANFFDLGEFVAPVIPIGLG). Residue Arg-140 coordinates a 1,2-diacyl-sn-glycero-3-phospho-(1'-sn-glycerol). Helical transmembrane passes span 174-194 (QLFEFFFEGVVLFSVLWLVTI), 200-220 (YLVLGLFMFLYGCARFICEFF), and 238-258 (GQILSIPMILLGAVILIAVFI).

Belongs to the Lgt family.

It is found in the cell inner membrane. It carries out the reaction L-cysteinyl-[prolipoprotein] + a 1,2-diacyl-sn-glycero-3-phospho-(1'-sn-glycerol) = an S-1,2-diacyl-sn-glyceryl-L-cysteinyl-[prolipoprotein] + sn-glycerol 1-phosphate + H(+). Its pathway is protein modification; lipoprotein biosynthesis (diacylglyceryl transfer). In terms of biological role, catalyzes the transfer of the diacylglyceryl group from phosphatidylglycerol to the sulfhydryl group of the N-terminal cysteine of a prolipoprotein, the first step in the formation of mature lipoproteins. In Francisella tularensis subsp. novicida (strain U112), this protein is Phosphatidylglycerol--prolipoprotein diacylglyceryl transferase.